The sequence spans 469 residues: ATP synthase subunit beta (469 aa).

153-160 provides a ligand contact to ATP; it reads GGAGVGKT.

The protein belongs to the ATPase alpha/beta chains family. F-type ATPases have 2 components, CF(1) - the catalytic core - and CF(0) - the membrane proton channel. CF(1) has five subunits: alpha(3), beta(3), gamma(1), delta(1), epsilon(1). CF(0) has three main subunits: a(1), b(2) and c(9-12). The alpha and beta chains form an alternating ring which encloses part of the gamma chain. CF(1) is attached to CF(0) by a central stalk formed by the gamma and epsilon chains, while a peripheral stalk is formed by the delta and b chains.

It localises to the cell membrane. The enzyme catalyses ATP + H2O + 4 H(+)(in) = ADP + phosphate + 5 H(+)(out). Its function is as follows. Produces ATP from ADP in the presence of a proton gradient across the membrane. The catalytic sites are hosted primarily by the beta subunits. The protein is ATP synthase subunit beta of Pediococcus pentosaceus (strain ATCC 25745 / CCUG 21536 / LMG 10740 / 183-1w).